The primary structure comprises 671 residues: tRNA 5-methylaminomethyl-2-thiouridine biosynthesis bifunctional protein MnmC (671 aa).

A tRNA (mnm(5)s(2)U34)-methyltransferase region spans residues 1 to 245 (MVNVMNTLSF…KREMLWGEKP (245 aa)). Residues 272-671 (VGGGVASLFV…RKLLKGSKVE (400 aa)) form an FAD-dependent cmnm(5)s(2)U34 oxidoreductase region.

This sequence in the N-terminal section; belongs to the methyltransferase superfamily. tRNA (mnm(5)s(2)U34)-methyltransferase family. In the C-terminal section; belongs to the DAO family. FAD is required as a cofactor.

It localises to the cytoplasm. It carries out the reaction 5-aminomethyl-2-thiouridine(34) in tRNA + S-adenosyl-L-methionine = 5-methylaminomethyl-2-thiouridine(34) in tRNA + S-adenosyl-L-homocysteine + H(+). Its function is as follows. Catalyzes the last two steps in the biosynthesis of 5-methylaminomethyl-2-thiouridine (mnm(5)s(2)U) at the wobble position (U34) in tRNA. Catalyzes the FAD-dependent demodification of cmnm(5)s(2)U34 to nm(5)s(2)U34, followed by the transfer of a methyl group from S-adenosyl-L-methionine to nm(5)s(2)U34, to form mnm(5)s(2)U34. The protein is tRNA 5-methylaminomethyl-2-thiouridine biosynthesis bifunctional protein MnmC of Actinobacillus pleuropneumoniae serotype 3 (strain JL03).